Here is a 446-residue protein sequence, read N- to C-terminus: Tubulin beta-6 chain (446 aa).

Residues Gln-11, Glu-69, Ser-138, Gly-142, Thr-143, Gly-144, Asn-204, and Asn-226 each coordinate GTP. Glu-69 provides a ligand contact to Mg(2+). Residues 426–446 (QDATADEEEYEDEEEVQADDM) are disordered. Over residues 429–446 (TADEEEYEDEEEVQADDM) the composition is skewed to acidic residues.

It belongs to the tubulin family. Dimer of alpha and beta chains. A typical microtubule is a hollow water-filled tube with an outer diameter of 25 nm and an inner diameter of 15 nM. Alpha-beta heterodimers associate head-to-tail to form protofilaments running lengthwise along the microtubule wall with the beta-tubulin subunit facing the microtubule plus end conferring a structural polarity. Microtubules usually have 13 protofilaments but different protofilament numbers can be found in some organisms and specialized cells. Mg(2+) serves as cofactor.

The protein localises to the cytoplasm. It is found in the cytoskeleton. Functionally, tubulin is the major constituent of microtubules, a cylinder consisting of laterally associated linear protofilaments composed of alpha- and beta-tubulin heterodimers. Microtubules grow by the addition of GTP-tubulin dimers to the microtubule end, where a stabilizing cap forms. Below the cap, tubulin dimers are in GDP-bound state, owing to GTPase activity of alpha-tubulin. This is Tubulin beta-6 chain (TUBB6) from Zea mays (Maize).